Here is a 105-residue protein sequence, read N- to C-terminus: Large ribosomal subunit protein uL24 (105 aa).

The protein belongs to the universal ribosomal protein uL24 family. In terms of assembly, part of the 50S ribosomal subunit.

Functionally, one of two assembly initiator proteins, it binds directly to the 5'-end of the 23S rRNA, where it nucleates assembly of the 50S subunit. In terms of biological role, one of the proteins that surrounds the polypeptide exit tunnel on the outside of the subunit. This is Large ribosomal subunit protein uL24 from Methylocella silvestris (strain DSM 15510 / CIP 108128 / LMG 27833 / NCIMB 13906 / BL2).